A 603-amino-acid polypeptide reads, in one-letter code: Geraniol synthase Tps-5073G30, chloroplastic (603 aa).

The N-terminal 35 residues, 1–35 (MCSISQKVVIGLNKAAANNNLQNLDRRGFKTRCVS), are a transit peptide targeting the chloroplast. Positions 319, 356, 360, 497, and 500 each coordinate (2E)-geranyl diphosphate. Mg(2+) contacts are provided by Asp356 and Asp360. The short motif at 356–360 (DDVYD) is the DDXXD motif element. 3 residues coordinate Mg(2+): Asp500, Thr504, and Glu508.

It belongs to the terpene synthase family. Tpsb subfamily. Monomer. Mg(2+) is required as a cofactor. It depends on Mn(2+) as a cofactor.

The protein resides in the plastid. It localises to the chloroplast. It catalyses the reaction (2E)-geranyl diphosphate + H2O = (2E)-geraniol + diphosphate. Its pathway is secondary metabolite biosynthesis; terpenoid biosynthesis. Functionally, monoterpene synthase (mono-TPS) involved in the biosynthesis of monoterpenes natural products. Catalyzes the conversion of (2E)-geranyl diphosphate (GPP) into geraniol. The polypeptide is Geraniol synthase Tps-5073G30, chloroplastic (Perilla frutescens (Beefsteak mint)).